We begin with the raw amino-acid sequence, 374 residues long: Methionine import ATP-binding protein MetN 2 (374 aa).

Positions 1–22 are disordered; the sequence is MSVATLQRKLPEAAPRRAGQTE. In terms of domain architecture, ABC transporter spans 32 to 271; the sequence is VRFIGLGKTY…PQHEVSKTLL (240 aa). 68–75 provides a ligand contact to ATP; the sequence is GRSGAGKS.

This sequence belongs to the ABC transporter superfamily. Methionine importer (TC 3.A.1.24) family. In terms of assembly, the complex is composed of two ATP-binding proteins (MetN), two transmembrane proteins (MetI) and a solute-binding protein (MetQ).

Its subcellular location is the cell inner membrane. It carries out the reaction L-methionine(out) + ATP + H2O = L-methionine(in) + ADP + phosphate + H(+). It catalyses the reaction D-methionine(out) + ATP + H2O = D-methionine(in) + ADP + phosphate + H(+). In terms of biological role, part of the ABC transporter complex MetNIQ involved in methionine import. Responsible for energy coupling to the transport system. The chain is Methionine import ATP-binding protein MetN 2 from Pseudomonas fluorescens (strain ATCC BAA-477 / NRRL B-23932 / Pf-5).